A 410-amino-acid chain; its full sequence is Serine/threonine transporter SstT (410 aa).

Helical transmembrane passes span 15-35 (GSLV…AWLS), 49-69 (FVNA…ISSI), 82-102 (PIVM…VVAS), 118-138 (IVPP…MVTN), 142-162 (AVMK…GFAF), 190-210 (FAPV…GFDA), 217-237 (LLGL…PLLV), 299-319 (MAGA…TLGI), 331-351 (LVAS…LLLI), and 358-378 (FGIP…IGVL).

It belongs to the dicarboxylate/amino acid:cation symporter (DAACS) (TC 2.A.23) family.

The protein localises to the cell inner membrane. It carries out the reaction L-serine(in) + Na(+)(in) = L-serine(out) + Na(+)(out). It catalyses the reaction L-threonine(in) + Na(+)(in) = L-threonine(out) + Na(+)(out). Functionally, involved in the import of serine and threonine into the cell, with the concomitant import of sodium (symport system). The sequence is that of Serine/threonine transporter SstT from Erwinia tasmaniensis (strain DSM 17950 / CFBP 7177 / CIP 109463 / NCPPB 4357 / Et1/99).